The chain runs to 197 residues: MADVEESTAPAEIQSRHVVYCGVCSLPPEYCEYGGTVKKCQEWLEKKYPSMYERLWSEDALAAATSTLSVDAQKRAAKDATKKAAKAEALEAKQNETLASSKIRIKRVERNKRKYVTEVQGLEAFGLELKKVAKEFGSRFATGSSVTKVASGGQEITVQGDVSDDVREFLIKNYKNIPKKNIVLEEPKKKKAEPVEV.

An SUI1 domain is found at 103–174 (IRIKRVERNK…DVREFLIKNY (72 aa)).

This sequence belongs to the DENR family. As to quaternary structure, interacts with the 40S ribosomal subunit.

The protein localises to the cytoplasm. The sequence is that of Translation machinery-associated protein 22 (tma22) from Botryotinia fuckeliana (strain B05.10) (Noble rot fungus).